The chain runs to 140 residues: Lymphocyte antigen 6H (140 aa).

An N-terminal signal peptide occupies residues 1–25 (MLPAAMKGLGLALLAVLLCSAPAHG). The UPAR/Ly6 domain maps to 26–91 (LWCQDCTLTT…RHFFSDYLMG (66 aa)). 4 cysteine pairs are disulfide-bonded: Cys28–Cys52, Cys31–Cys40, Cys45–Cys73, and Cys77–Cys104. Asn36 is a glycosylation site (N-linked (GlcNAc...) asparagine). Gly115 carries GPI-anchor amidated glycine lipidation. Residues 116–140 (AGHSPWALAGGLLLSLGPALLWAGP) constitute a propeptide, removed in mature form.

In terms of assembly, interacts with CHRNA4 and CHRNA7.

Its subcellular location is the cell membrane. Its function is as follows. Believed to act as a modulator of nicotinic acetylcholine receptors (nAChRs) activity. In vitro inhibits alpha-3:beta-4-containing nAChRs maximum response. May play a role in the intracellular trafficking of alpha-7-containing nAChRs and may inhibit their expression at the cell surface. Seems to inhibit alpha-7/CHRNA7 signaling in hippocampal neurons. The protein is Lymphocyte antigen 6H (LY6H) of Macaca fascicularis (Crab-eating macaque).